The following is a 479-amino-acid chain: mRNA export factor ICP27 homolog (479 aa).

The segment covering methionine 1–serine 15 has biased composition (low complexity). Disordered regions lie at residues methionine 1 to valine 77 and lysine 91 to tryptophan 210. Over residues threonine 35 to glycine 44 the composition is skewed to acidic residues. The segment covering glutamate 132–glycine 142 has biased composition (basic and acidic residues). Zn(2+)-binding residues include cysteine 354, histidine 445, cysteine 449, and cysteine 454. The CHC2-type zinc-finger motif lies at cysteine 354 to cysteine 454.

It belongs to the HHV-1 ICP27 protein family. In terms of assembly, interacts with host XPO1 and with the XPO1 export pathway components small GTPase RAN and nucleoporin NUP214. Interacts with host SPEN, OTT1 and OTT3. Interacts with host SRSF1, SRSF3, SRSF7 and SRPK1. Interacts with host DHX9; this interaction may have an inhibitory effect on virion production. Interacts (via N-terminus) with host NXF1; this interaction plays a role in mRNA export. In terms of processing, phosphorylated by cellular protein kinase CK2.

The protein localises to the host nucleus. The protein resides in the host cytoplasm. In terms of biological role, promotes the nuclear export of a subset of early and late viral mRNAs by interacting with mRNAs and cellular export proteins. Additionally may prevent the establishment of cellular antiviral state, by acting as an alternative splicing factor for cellular RNAs such as STAT1, resulting in a STAT1 mRNA incapable of producing the STAT1alpha isoform. This is mRNA export factor ICP27 homolog from Homo sapiens (Human).